The primary structure comprises 353 residues: Protein-glutamate methylesterase/protein-glutamine glutaminase 3 (353 aa).

The Response regulatory domain maps to 3 to 120; the sequence is KVLIADDSAL…SSSSDMKKVA (118 aa). 4-aspartylphosphate is present on D54. The 196-residue stretch at 158–353 folds into the CheB-type methylesterase domain; that stretch reads PRPGREVTKA…AREIIRAVNR (196 aa). Active-site residues include S173, H200, and D296.

It belongs to the CheB family. Post-translationally, phosphorylated by CheA. Phosphorylation of the N-terminal regulatory domain activates the methylesterase activity.

The protein resides in the cytoplasm. The enzyme catalyses [protein]-L-glutamate 5-O-methyl ester + H2O = L-glutamyl-[protein] + methanol + H(+). It catalyses the reaction L-glutaminyl-[protein] + H2O = L-glutamyl-[protein] + NH4(+). Involved in chemotaxis. Part of a chemotaxis signal transduction system that modulates chemotaxis in response to various stimuli. Catalyzes the demethylation of specific methylglutamate residues introduced into the chemoreceptors (methyl-accepting chemotaxis proteins or MCP) by CheR. Also mediates the irreversible deamidation of specific glutamine residues to glutamic acid. The chain is Protein-glutamate methylesterase/protein-glutamine glutaminase 3 from Syntrophomonas wolfei subsp. wolfei (strain DSM 2245B / Goettingen).